The primary structure comprises 223 residues: UPF0758 protein FMG_0357 (223 aa).

Positions 101 to 223 (SLNDPDSVAE…SLSMRKGMYF (123 aa)) constitute an MPN domain. 3 residues coordinate Zn(2+): His172, His174, and Asp185. The JAMM motif motif lies at 172-185 (HNHPSGSLIPSNAD).

The protein belongs to the UPF0758 family.

The sequence is that of UPF0758 protein FMG_0357 from Finegoldia magna (strain ATCC 29328 / DSM 20472 / WAL 2508) (Peptostreptococcus magnus).